Reading from the N-terminus, the 322-residue chain is Putative DNA-directed RNA polymerase subunit alpha-like 2 (322 aa).

Residues 1 to 232 are alpha N-terminal domain (alpha-NTD); that stretch reads MSNPNNGAEW…GLLSLVFQAE (232 aa). Positions 280–322 are alpha C-terminal domain (alpha-CTD); that stretch reads EGPVTDEEGDSIDPTFTPVQKWDITMNSYQYSGETFQGLLSRF.

Belongs to the RNA polymerase alpha chain family. In plastids the minimal PEP RNA polymerase catalytic core is composed of four subunits: alpha, beta, beta', and beta''. When a (nuclear-encoded) sigma factor is associated with the core the holoenzyme is formed, which can initiate transcription.

It localises to the plastid. It is found in the chloroplast. It carries out the reaction RNA(n) + a ribonucleoside 5'-triphosphate = RNA(n+1) + diphosphate. DNA-dependent RNA polymerase catalyzes the transcription of DNA into RNA using the four ribonucleoside triphosphates as substrates. This is Putative DNA-directed RNA polymerase subunit alpha-like 2 (rpoAL2-A) from Pelargonium hortorum (Common geranium).